We begin with the raw amino-acid sequence, 414 residues long: NADH-ubiquinone oxidoreductase chain 4 (414 aa).

10 helical membrane passes run 18–38 (LVQL…MIGV), 47–67 (IAAF…LMSI), 96–116 (IIFI…PLHL), 126–146 (PTAG…YGYI), 160–180 (YFPI…IATL), 188–208 (IVAY…FSGV), 216–236 (IILM…IGVI), 254–274 (MMPI…AFPI), 293–313 (IIIA…SFWL), and 375–395 (VNIF…IVGM).

The protein belongs to the complex I subunit 4 family.

It localises to the mitochondrion membrane. The catalysed reaction is a ubiquinone + NADH + 5 H(+)(in) = a ubiquinol + NAD(+) + 4 H(+)(out). Core subunit of the mitochondrial membrane respiratory chain NADH dehydrogenase (Complex I) that is believed to belong to the minimal assembly required for catalysis. Complex I functions in the transfer of electrons from NADH to the respiratory chain. The immediate electron acceptor for the enzyme is believed to be ubiquinone. The polypeptide is NADH-ubiquinone oxidoreductase chain 4 (nad4) (Dictyostelium citrinum (Slime mold)).